We begin with the raw amino-acid sequence, 274 residues long: Large ribosomal subunit protein uL2 (274 aa).

The interval 223 to 265 is disordered; that stretch reads VVMNPVDHPHGGGEGRTSGGRHPVSPWGVPTKGYKTRSNKRTD.

Belongs to the universal ribosomal protein uL2 family. Part of the 50S ribosomal subunit. Forms a bridge to the 30S subunit in the 70S ribosome.

In terms of biological role, one of the primary rRNA binding proteins. Required for association of the 30S and 50S subunits to form the 70S ribosome, for tRNA binding and peptide bond formation. It has been suggested to have peptidyltransferase activity; this is somewhat controversial. Makes several contacts with the 16S rRNA in the 70S ribosome. This is Large ribosomal subunit protein uL2 from Vibrio vulnificus (strain CMCP6).